Consider the following 626-residue polypeptide: MDIRTVLKDNFLQYSSYVIKDRAIASVVDGFKPVQRRIIHSLFEMHDGNFHKVANVVGNTMKYHPHGDTSIYEALVNIANKDLFIEKQGNFGNLFTGDPASASRYIECRLTPLAFDVLYSKEITIYESSYDGRNNEPLLYPAKIPVILIQGSEGIAVGMAAKILPHNFNEILNAVKSELLGESYDIYPDFPTGGIVDVNEYADGNGKVLVRAKIETIDEKTIVIRELPFGETTESLISSIEKAIRKNYIKVSSINDFTAENVAIELSLPRGVYASEVIEKLYHYTNCQISISVNLLLLSERYPVVYTIKDLIKFHAAHLQKILKMELELQKSKILEKIFYKTLEQIFIEKKIYKLLETISKEENILSIILSEVLRHKESFSREVLKEDVENLLKIPIRKISLFDIDKNSKDIKILNKELKSINSNISSIRGYSINFIDLLLAKYSKEHQRKTKISLIKSKNVKEIATKNMKVYLNLAEGFAGTSLFDGEFIGNASYYDKILVFRENSYVLKNIEDKTFIDKKNVCALVYDINNSKEQIFSIIYFNRLDNFYYVKRFKIDKFITDKVYEFLGENDEFVDFSLNPEFVEFSTNKDIVKRIEIDNFMVKSRSSIGKRISSNNLKKVKFK.

Residues Ile24 to Leu439 form the Topo IIA-type catalytic domain. Tyr105 functions as the O-(5'-phospho-DNA)-tyrosine intermediate in the catalytic mechanism.

It belongs to the type II topoisomerase GyrA/ParC subunit family. In terms of assembly, heterotetramer composed of ParC and ParE.

The protein resides in the cell membrane. It carries out the reaction ATP-dependent breakage, passage and rejoining of double-stranded DNA.. Functionally, topoisomerase IV is essential for chromosome segregation. It relaxes supercoiled DNA. Performs the decatenation events required during the replication of a circular DNA molecule. The polypeptide is DNA topoisomerase 4 subunit A (parC) (Borreliella burgdorferi (strain ATCC 35210 / DSM 4680 / CIP 102532 / B31) (Borrelia burgdorferi)).